The primary structure comprises 133 residues: Large ribosomal subunit protein bL12 (133 aa).

It belongs to the bacterial ribosomal protein bL12 family. As to quaternary structure, homodimer. Part of the ribosomal stalk of the 50S ribosomal subunit. Forms a multimeric L10(L12)X complex, where L10 forms an elongated spine to which 2 to 4 L12 dimers bind in a sequential fashion. Binds GTP-bound translation factors.

Functionally, forms part of the ribosomal stalk which helps the ribosome interact with GTP-bound translation factors. Is thus essential for accurate translation. The sequence is that of Large ribosomal subunit protein bL12 from Ehrlichia chaffeensis (strain ATCC CRL-10679 / Arkansas).